The primary structure comprises 506 residues: Histidine ammonia-lyase (506 aa).

The 5-imidazolinone (Ala-Gly) cross-link spans 143-145 (ASG). Serine 144 carries the 2,3-didehydroalanine (Ser) modification.

Belongs to the PAL/histidase family. Post-translationally, contains an active site 4-methylidene-imidazol-5-one (MIO), which is formed autocatalytically by cyclization and dehydration of residues Ala-Ser-Gly.

It localises to the cytoplasm. The enzyme catalyses L-histidine = trans-urocanate + NH4(+). It functions in the pathway amino-acid degradation; L-histidine degradation into L-glutamate; N-formimidoyl-L-glutamate from L-histidine: step 1/3. This is Histidine ammonia-lyase from Enterobacter sp. (strain 638).